Reading from the N-terminus, the 190-residue chain is CD70 antigen (190 aa).

Residues 1–17 are Cytoplasmic-facing; it reads MEEEGSGCNVPRLPWAS. Residues 18–38 form a helical membrane-spanning segment; sequence ILRAALLLLLIGMVIYCFLCG. Residues 39–190 are Extracellular-facing; the sequence is QRFTQQQLDS…TFFGVQLVRP (152 aa). The 137-residue stretch at 52–188 folds into the THD domain; the sequence is DLAELLLNHT…DETFFGVQLV (137 aa). Residues N59 and N110 are each glycosylated (N-linked (GlcNAc...) asparagine). Cystine bridges form between C111/C148 and C130/C165. N167 is a glycosylation site (N-linked (GlcNAc...) asparagine).

The protein belongs to the tumor necrosis factor family. Homotrimer. In terms of processing, N-glycosylated.

The protein resides in the cell membrane. Its function is as follows. Expressed at the plasma membrane of B cells, it is the ligand of the CD27 receptor which is specifically expressed at the surface of T cells. The CD70-CD27 signaling pathway mediates antigen-specific T cell activation and expansion which in turn provides immune surveillance of B cells. The chain is CD70 antigen from Sus scrofa (Pig).